A 767-amino-acid polypeptide reads, in one-letter code: Syn-copalyl diphosphate synthase (767 aa).

Positions 45–74 (GPMLISKSPPYPASEETREWEAEGQHEHTD) are disordered. Residues 59 to 74 (EETREWEAEGQHEHTD) are compositionally biased toward basic and acidic residues. Lys233 contacts substrate. The Mg(2+) site is built by Asp365 and Asp367. Positions 365-368 (DIDD) match the DXDD motif motif. Residue Lys453 coordinates substrate.

Mg(2+) is required as a cofactor.

It carries out the reaction (2E,6E,10E)-geranylgeranyl diphosphate = 9alpha-copalyl diphosphate. Catalyzes the conversion of geranylgeranyl diphosphate to the phytoalexin precursor syn-copalyl diphosphate. This Oryza sativa subsp. indica (Rice) protein is Syn-copalyl diphosphate synthase (CPS4).